Here is a 349-residue protein sequence, read N- to C-terminus: Transcription elongation factor A protein 3 (349 aa).

Residues 5–82 enclose the TFIIS N-terminal domain; the sequence is EELLRIAKKL…RNWKQLLDSP (78 aa). The tract at residues 80–170 is disordered; sequence DSPATPKGEK…RTPSSPSSPT (91 aa). Residues 101-110 are compositionally biased toward basic and acidic residues; sequence KGLDCSDWKP. Ser-115 carries the post-translational modification Phosphoserine. Over residues 121 to 133 the composition is skewed to basic and acidic residues; sequence RVEEPKDRRDSVD. 2 stretches are compositionally biased toward low complexity: residues 134–144 and 160–170; these read SKSSATSSPKR and PRTPSSPSSPT. The residue at position 141 (Ser-141) is a Phosphoserine. Positions 188–304 constitute a TFIIS central domain; sequence VRDKCVEMLS…EHQMAKTGGT (117 aa). The TFIIS-type zinc-finger motif lies at 307–347; that stretch reads DLFQCSKCKKKNCTYNQVQTRSADEPMTTFVLCNECGNRWK. Residues Cys-311, Cys-314, Cys-339, and Cys-342 each contribute to the Zn(2+) site.

This sequence belongs to the TFS-II family.

It is found in the nucleus. Its function is as follows. Necessary for efficient RNA polymerase II transcription elongation past template-encoded arresting sites. The arresting sites in DNA have the property of trapping a certain fraction of elongating RNA polymerases that pass through, resulting in locked ternary complexes. Cleavage of the nascent transcript by S-II allows the resumption of elongation from the new 3'-terminus. The chain is Transcription elongation factor A protein 3 (TCEA3) from Bos taurus (Bovine).